A 535-amino-acid polypeptide reads, in one-letter code: Prolyl 4-hydroxylase subunit alpha-2 (535 aa).

Residues 1-21 form the signal peptide; sequence MKLWVSALLMAWFGVLSCVQA. Asn-115 carries an N-linked (GlcNAc...) asparagine glycan. The TPR repeat unit spans residues 207–240; it reads SQVLDYLSYAVFQLGDLHRALELTRRLLSLDPSH. Asn-264 carries N-linked (GlcNAc...) asparagine glycosylation. Positions 412–520 constitute a Fe2OG dioxygenase domain; that stretch reads TAELLQVANY…KWVSNKWFHE (109 aa). Positions 430 and 432 each coordinate Fe cation. Lys-480 carries the N6-succinyllysine modification. His-501 is a binding site for Fe cation. A 2-oxoglutarate-binding site is contributed by Lys-511.

The protein belongs to the P4HA family. Heterotetramer of two alpha-2 chains and two beta chains (P4HB) (the beta chain is the multi-functional PDI), where P4HB plays the role of a structural subunit; this tetramer catalyzes the formation of 4-hydroxyproline in collagen. Requires Fe(2+) as cofactor. The cofactor is L-ascorbate. In terms of tissue distribution, expressed in the heart, placenta, lung and pancreas.

The protein resides in the endoplasmic reticulum lumen. The catalysed reaction is L-prolyl-[collagen] + 2-oxoglutarate + O2 = trans-4-hydroxy-L-prolyl-[collagen] + succinate + CO2. With respect to regulation, inhibited by poly(L-proline) only at very high concentrations. Its function is as follows. Catalyzes the post-translational formation of 4-hydroxyproline in -Xaa-Pro-Gly- sequences in collagens and other proteins. The chain is Prolyl 4-hydroxylase subunit alpha-2 (P4HA2) from Homo sapiens (Human).